A 152-amino-acid chain; its full sequence is SsrA-binding protein (152 aa).

The protein belongs to the SmpB family.

It localises to the cytoplasm. Functionally, required for rescue of stalled ribosomes mediated by trans-translation. Binds to transfer-messenger RNA (tmRNA), required for stable association of tmRNA with ribosomes. tmRNA and SmpB together mimic tRNA shape, replacing the anticodon stem-loop with SmpB. tmRNA is encoded by the ssrA gene; the 2 termini fold to resemble tRNA(Ala) and it encodes a 'tag peptide', a short internal open reading frame. During trans-translation Ala-aminoacylated tmRNA acts like a tRNA, entering the A-site of stalled ribosomes, displacing the stalled mRNA. The ribosome then switches to translate the ORF on the tmRNA; the nascent peptide is terminated with the 'tag peptide' encoded by the tmRNA and targeted for degradation. The ribosome is freed to recommence translation, which seems to be the essential function of trans-translation. The protein is SsrA-binding protein of Rickettsia massiliae (strain Mtu5).